The chain runs to 363 residues: MKFNPFLEAIKTYESGKDMDLVAKEYGLKEVIKLASNENPYGTSKKAKEAIINNAHLAHLYPDDTMSELKQALAQKYDILKENLIIGSGSDQIIEYIVHAKLDHSKAYLQCGVSFAMYEIYAKQLGVKVYKTPSLTHDLNELYELYQKHKNEIKVIFLCLPNNPLGECLDASAVFEFLEKIDEDCLVAIDGAYNEFASFKDSKKHINPKELIHKFQNAVYLGTFSKLYGLGGMRVGYGIACKEIINAFYKLRAPFNVTNLSLKAAVAALDDDEFVQKTLENNFSQMKLYEDFAKNYKIRYIPSYTNFITYFFDEKNSTDLSEKLLKNGIIIRNLQSYGLNAVRISIGTEYENSRFFEEFSKNF.

The residue at position 226 (Lys226) is an N6-(pyridoxal phosphate)lysine.

The protein belongs to the class-II pyridoxal-phosphate-dependent aminotransferase family. Histidinol-phosphate aminotransferase subfamily. As to quaternary structure, homodimer. It depends on pyridoxal 5'-phosphate as a cofactor.

It carries out the reaction L-histidinol phosphate + 2-oxoglutarate = 3-(imidazol-4-yl)-2-oxopropyl phosphate + L-glutamate. Its pathway is amino-acid biosynthesis; L-histidine biosynthesis; L-histidine from 5-phospho-alpha-D-ribose 1-diphosphate: step 7/9. This chain is Histidinol-phosphate aminotransferase, found in Campylobacter lari (strain RM2100 / D67 / ATCC BAA-1060).